A 483-amino-acid polypeptide reads, in one-letter code: ATP synthase subunit beta (483 aa).

An ATP-binding site is contributed by Gly-167–Thr-174.

Belongs to the ATPase alpha/beta chains family. In terms of assembly, F-type ATPases have 2 components, CF(1) - the catalytic core - and CF(0) - the membrane proton channel. CF(1) has five subunits: alpha(3), beta(3), gamma(1), delta(1), epsilon(1). CF(0) has three main subunits: a(1), b(2) and c(9-12). The alpha and beta chains form an alternating ring which encloses part of the gamma chain. CF(1) is attached to CF(0) by a central stalk formed by the gamma and epsilon chains, while a peripheral stalk is formed by the delta and b chains.

Its subcellular location is the cell membrane. It catalyses the reaction ATP + H2O + 4 H(+)(in) = ADP + phosphate + 5 H(+)(out). Produces ATP from ADP in the presence of a proton gradient across the membrane. The catalytic sites are hosted primarily by the beta subunits. This Paenarthrobacter aurescens (strain TC1) protein is ATP synthase subunit beta.